The chain runs to 608 residues: Chaperone protein HtpG (608 aa).

Residues 1 to 332 (MQFQTEVNQL…VEDLPLNVSR (332 aa)) are a; substrate-binding. The segment at 333–536 (EILQENQILK…KNKLDFAMQQ (204 aa)) is b. Residues 537-608 (LLKQMGQEQN…LTKIINKAFS (72 aa)) are c.

Belongs to the heat shock protein 90 family. In terms of assembly, homodimer.

It is found in the cytoplasm. Molecular chaperone. Has ATPase activity. This is Chaperone protein HtpG from Campylobacter jejuni subsp. doylei (strain ATCC BAA-1458 / RM4099 / 269.97).